The chain runs to 245 residues: 1-(5-phosphoribosyl)-5-[(5-phosphoribosylamino)methylideneamino] imidazole-4-carboxamide isomerase (245 aa).

The Proton acceptor role is filled by Asp-8. The Proton donor role is filled by Asp-130.

The protein belongs to the HisA/HisF family.

It localises to the cytoplasm. It carries out the reaction 1-(5-phospho-beta-D-ribosyl)-5-[(5-phospho-beta-D-ribosylamino)methylideneamino]imidazole-4-carboxamide = 5-[(5-phospho-1-deoxy-D-ribulos-1-ylimino)methylamino]-1-(5-phospho-beta-D-ribosyl)imidazole-4-carboxamide. It participates in amino-acid biosynthesis; L-histidine biosynthesis; L-histidine from 5-phospho-alpha-D-ribose 1-diphosphate: step 4/9. This Pseudomonas putida (strain ATCC 700007 / DSM 6899 / JCM 31910 / BCRC 17059 / LMG 24140 / F1) protein is 1-(5-phosphoribosyl)-5-[(5-phosphoribosylamino)methylideneamino] imidazole-4-carboxamide isomerase.